Here is a 350-residue protein sequence, read N- to C-terminus: Putative transport protein YdbI (350 aa).

Helical transmembrane passes span 18–38, 67–87, 145–165, 207–227, 229–249, 257–277, 289–309, and 311–331; these read IFVV…LILL, VVIT…GFVF, ISTF…FLFE, FIIA…MHFP, LFGL…GVVI, IAYS…IFAI, LMSA…IFSE, and FFGI…LDIL.

The protein belongs to the autoinducer-2 exporter (AI-2E) (TC 2.A.86) family.

It localises to the cell membrane. This is Putative transport protein YdbI (ydbI) from Bacillus subtilis (strain 168).